Here is a 236-residue protein sequence, read N- to C-terminus: Ubiquinone biosynthesis O-methyltransferase (236 aa).

Positions 39, 59, 80, and 124 each coordinate S-adenosyl-L-methionine.

Belongs to the methyltransferase superfamily. UbiG/COQ3 family.

It catalyses the reaction a 3-demethylubiquinol + S-adenosyl-L-methionine = a ubiquinol + S-adenosyl-L-homocysteine + H(+). It carries out the reaction a 3-(all-trans-polyprenyl)benzene-1,2-diol + S-adenosyl-L-methionine = a 2-methoxy-6-(all-trans-polyprenyl)phenol + S-adenosyl-L-homocysteine + H(+). It participates in cofactor biosynthesis; ubiquinone biosynthesis. In terms of biological role, O-methyltransferase that catalyzes the 2 O-methylation steps in the ubiquinone biosynthetic pathway. The polypeptide is Ubiquinone biosynthesis O-methyltransferase (Shewanella pealeana (strain ATCC 700345 / ANG-SQ1)).